Reading from the N-terminus, the 238-residue chain is Small ribosomal subunit protein uS2 (238 aa).

The protein belongs to the universal ribosomal protein uS2 family.

The sequence is that of Small ribosomal subunit protein uS2 from Synechococcus sp. (strain CC9311).